The following is a 304-amino-acid chain: Quinolinate synthase (304 aa).

Iminosuccinate contacts are provided by His24 and Ser41. A [4Fe-4S] cluster-binding site is contributed by Cys86. Residues 112-114 and Ser129 each bind iminosuccinate; that span reads YVN. [4Fe-4S] cluster is bound at residue Cys171. Iminosuccinate is bound by residues 197-199 and Thr214; that span reads HPE. Cys259 provides a ligand contact to [4Fe-4S] cluster.

This sequence belongs to the quinolinate synthase family. Type 2 subfamily. [4Fe-4S] cluster is required as a cofactor.

It localises to the cytoplasm. It carries out the reaction iminosuccinate + dihydroxyacetone phosphate = quinolinate + phosphate + 2 H2O + H(+). The protein operates within cofactor biosynthesis; NAD(+) biosynthesis; quinolinate from iminoaspartate: step 1/1. Its function is as follows. Catalyzes the condensation of iminoaspartate with dihydroxyacetone phosphate to form quinolinate. The protein is Quinolinate synthase of Geobacter sp. (strain M21).